Here is a 314-residue protein sequence, read N- to C-terminus: Ribosomal protein L11 methyltransferase (314 aa).

4 residues coordinate S-adenosyl-L-methionine: Thr161, Gly182, Asp204, and Asn248.

The protein belongs to the methyltransferase superfamily. PrmA family.

It is found in the cytoplasm. The catalysed reaction is L-lysyl-[protein] + 3 S-adenosyl-L-methionine = N(6),N(6),N(6)-trimethyl-L-lysyl-[protein] + 3 S-adenosyl-L-homocysteine + 3 H(+). Functionally, methylates ribosomal protein L11. The sequence is that of Ribosomal protein L11 methyltransferase from Listeria welshimeri serovar 6b (strain ATCC 35897 / DSM 20650 / CCUG 15529 / CIP 8149 / NCTC 11857 / SLCC 5334 / V8).